Reading from the N-terminus, the 122-residue chain is Acidic phospholipase A2 1 (122 aa).

Intrachain disulfides connect Cys26–Cys115, Cys28–Cys44, Cys43–Cys94, Cys49–Cys122, Cys50–Cys87, Cys57–Cys81, and Cys75–Cys85. Ca(2+)-binding residues include Tyr27, Gly29, and Gly31. The active site involves His47. Residue Asp48 participates in Ca(2+) binding. Asp88 is an active-site residue.

The protein belongs to the phospholipase A2 family. Group II subfamily. D49 sub-subfamily. In terms of assembly, homodimer. It depends on Ca(2+) as a cofactor. Expressed by the venom gland.

It is found in the secreted. The catalysed reaction is a 1,2-diacyl-sn-glycero-3-phosphocholine + H2O = a 1-acyl-sn-glycero-3-phosphocholine + a fatty acid + H(+). In terms of biological role, PLA2 catalyzes the calcium-dependent hydrolysis of the 2-acyl groups in 3-sn-phosphoglycerides. This is Acidic phospholipase A2 1 from Protobothrops mucrosquamatus (Taiwan habu).